Here is a 373-residue protein sequence, read N- to C-terminus: Alanine racemase (373 aa).

K40 serves as the catalytic Proton acceptor; specific for D-alanine. At K40 the chain carries N6-(pyridoxal phosphate)lysine. R140 is a substrate binding site. The active-site Proton acceptor; specific for L-alanine is the Y268. A substrate-binding site is contributed by M315.

The protein belongs to the alanine racemase family. The cofactor is pyridoxal 5'-phosphate.

It carries out the reaction L-alanine = D-alanine. Its pathway is amino-acid biosynthesis; D-alanine biosynthesis; D-alanine from L-alanine: step 1/1. Its function is as follows. Catalyzes the interconversion of L-alanine and D-alanine. May also act on other amino acids. The sequence is that of Alanine racemase (alr) from Levilactobacillus brevis (strain ATCC 367 / BCRC 12310 / CIP 105137 / JCM 1170 / LMG 11437 / NCIMB 947 / NCTC 947) (Lactobacillus brevis).